We begin with the raw amino-acid sequence, 385 residues long: Benzoylsuccinyl-CoA thiolase subunit BbsB (385 aa).

Arg-19 lines the CoA pocket. Catalysis depends on Cys-84, which acts as the Acyl-thioester intermediate. CoA contacts are provided by Gly-121, Arg-193, Cys-204, and Cys-205.

The protein belongs to the thiolase-like superfamily. Thiolase family. As to quaternary structure, heterotetramer composed of two BbsA subunits and two BbsB subunits. BbsB forms homodimeric subcomplexes. Both BbsA and BbsB are essential for enzymatic activity.

It catalyses the reaction (S)-2-benzoylsuccinyl-CoA + CoA = benzoyl-CoA + succinyl-CoA. Its pathway is xenobiotic degradation; toluene degradation. In terms of biological role, component of the BbsAB thiolase complex, which catalyzes the thiolytic cleavage of (S)-2-benzoylsuccinyl-CoA to succinyl-CoA and benzoyl-CoA, the final step of anaerobic toluene metabolism. The sequence is that of Benzoylsuccinyl-CoA thiolase subunit BbsB from Thauera aromatica.